We begin with the raw amino-acid sequence, 707 residues long: Prolyl endopeptidase-like (707 aa).

Active-site charge relay system residues include Ser538, Asp624, and His670.

This sequence belongs to the peptidase S9A family. In terms of assembly, homodimer.

It localises to the cytoplasm. The protein localises to the cytosol. Serine peptidase whose precise substrate specificity remains unclear. Does not cleave peptides after a arginine or lysine residue. Regulates trans-Golgi network morphology and sorting by regulating the membrane binding of the AP-1 complex. May play a role in the regulation of synaptic vesicle exocytosis. This is Prolyl endopeptidase-like (prepl) from Xenopus laevis (African clawed frog).